The chain runs to 359 residues: Histamine H2 receptor (359 aa).

Residues 1–22 are Extracellular-facing; that stretch reads MAFNGTVPSFCMDFTVYKVTIS. N-linked (GlcNAc...) asparagine glycosylation occurs at asparagine 4. A helical transmembrane segment spans residues 23 to 44; the sequence is VILIILILVTVAGNVVVCLAVG. The Cytoplasmic segment spans residues 45 to 57; the sequence is LNRRLRSLTNCFI. A helical membrane pass occupies residues 58–81; the sequence is VSLAVTDLLLGLLVLPFSAIYQLS. Residues 82-92 lie on the Extracellular side of the membrane; sequence CKWSFSKVFCN. A disulfide bridge connects residues cysteine 91 and cysteine 174. A helical transmembrane segment spans residues 93–114; sequence IYTSLDVMLCTASILNLFMISL. At 115–134 the chain is on the cytoplasmic side; it reads DRYCAVTDPLRYPVLITPAR. Residues 135-159 traverse the membrane as a helical segment; it reads VAISLVFIWVISITLSFLSIHLGWN. Residues 160–180 are Extracellular-facing; it reads SRNETSKDNDTIVKCKVQVNE. The chain crosses the membrane as a helical span at residues 181–204; the sequence is VYGLVDGLVTFYLPLLIMCITYFR. Residues 205–234 lie on the Cytoplasmic side of the membrane; it reads IFKIAREQARRINHIGSWKAATIREHKATV. Residues 235 to 258 form a helical membrane-spanning segment; that stretch reads TLAAVMGAFIICWFPYFTVFVYRG. The Extracellular segment spans residues 259–267; sequence LKGDDAVNE. A helical transmembrane segment spans residues 268–289; sequence VFEDVVLWLGYANSALNPILYA. Over 290-359 the chain is Cytoplasmic; sequence ALNRDFRTAY…VTAPQGATNR (70 aa). The S-palmitoyl cysteine moiety is linked to residue cysteine 305.

It belongs to the G-protein coupled receptor 1 family.

The protein localises to the cell membrane. In terms of biological role, the H2 subclass of histamine receptors mediates gastric acid secretion. The activity of this receptor is mediated by G proteins which activate adenylyl cyclase. This is Histamine H2 receptor (HRH2) from Cavia porcellus (Guinea pig).